A 510-amino-acid chain; its full sequence is MTMSRSSRSSVLALALATGSLVAAGPCDIYSSGGTPCIAAHSTTRALYSSYNGPLYQVQRASDGTTTTITPLSAGGVADASAQDAFCENTTCLITIIYDQSGNGNDLTQAPPGGFNGPDVGGYDNLAGAIGAPVTLNGKKAYGVFVSPGTGYRNNEAIGTATGDEPEGMYAVLDGTHYNDGCCFDYGNAETSSLDTGNGHMEAIYYGTNTAWGYGAGNGPWIMADLENGLFSGQSSDYNAGDPSISYRFVTAILKGGPNLWALRGGNAASGSLSTYYNGIRPTDASGYNPMSKEGAIILGIGGDNSVSAQGTFYEGAMTDGYPDDATENSVQADIVAAKYATTSLISGPALTVGDTVSLKVTTSGYDTRYIAHTGSTINTQVVSSSSSSTLKQQASWTVRTGLASTAAANGCVSFESVDTPGSYIRHSNFALLLNANDGTKLFSEDATFCPQDSFNDDGTNSIRSWNYPTRYWRHYENVLYVASNGGVNTFDAATAFTDDVSWVVADGFA.

An N-terminal signal peptide occupies residues 1-24 (MTMSRSSRSSVLALALATGSLVAA). The tract at residues 25-342 (GPCDIYSSGG…ADIVAAKYAT (318 aa)) is catalytic. Cystine bridges form between cysteine 27/cysteine 37, cysteine 87/cysteine 92, and cysteine 182/cysteine 183. A glycan (N-linked (GlcNAc...) asparagine) is linked at asparagine 89. Aspartate 225 contributes to the substrate binding site. Glutamate 227 (nucleophile) is an active-site residue. Positions 228 and 303 each coordinate substrate. The Proton donor role is filled by aspartate 304. The tract at residues 343-510 (TSLISGPALT…VSWVVADGFA (168 aa)) is ABD. Cysteines 412 and 450 form a disulfide. Residues histidine 427, asparagine 429, phenylalanine 430, aspartate 446, histidine 475, glutamate 477, leucine 480, and aspartate 500 each coordinate substrate.

Belongs to the glycosyl hydrolase 54 family.

The protein localises to the secreted. The catalysed reaction is Hydrolysis of terminal non-reducing alpha-L-arabinofuranoside residues in alpha-L-arabinosides.. The protein operates within glycan metabolism; L-arabinan degradation. Functionally, alpha-L-arabinofuranosidase involved in the degradation of arabinoxylan, a major component of plant hemicellulose. Able to hydrolyze 1,5-, 1,3- and 1,2-alpha-linkages not only in L-arabinofuranosyl oligosaccharides, but also in polysaccharides containing terminal non-reducing L-arabinofuranoses in side chains, like L-arabinan, arabinogalactan and arabinoxylan. In Emericella nidulans (strain FGSC A4 / ATCC 38163 / CBS 112.46 / NRRL 194 / M139) (Aspergillus nidulans), this protein is Alpha-L-arabinofuranosidase B (abfB).